A 150-amino-acid chain; its full sequence is Large ribosomal subunit protein uL13 (150 aa).

Belongs to the universal ribosomal protein uL13 family. In terms of assembly, part of the 50S ribosomal subunit.

This protein is one of the early assembly proteins of the 50S ribosomal subunit, although it is not seen to bind rRNA by itself. It is important during the early stages of 50S assembly. The sequence is that of Large ribosomal subunit protein uL13 from Chlorobium phaeobacteroides (strain BS1).